The primary structure comprises 617 residues: Leucine aminopeptidase 2 (617 aa).

A peptide-binding positions include 139–141 (QCQ) and 271–276 (PYGGME). Position 300 (His-300) interacts with Zn(2+). The active-site Proton acceptor is Glu-301. The Zn(2+) site is built by His-304 and Glu-323. The Proton donor role is filled by Tyr-388.

Belongs to the peptidase M1 family. Zn(2+) serves as cofactor.

It localises to the cytoplasm. The protein resides in the nucleus. The catalysed reaction is an epoxide + H2O = an ethanediol. Aminopeptidase that preferentially cleaves di- and tripeptides. Also has low epoxide hydrolase activity (in vitro). Can hydrolyze the epoxide leukotriene LTA(4) but it forms preferentially 5,6-dihydroxy-7,9,11,14-eicosatetraenoic acid rather than the cytokine leukotriene B(4) as the product compared to the homologous mammalian enzyme (in vitro). In Neosartorya fischeri (strain ATCC 1020 / DSM 3700 / CBS 544.65 / FGSC A1164 / JCM 1740 / NRRL 181 / WB 181) (Aspergillus fischerianus), this protein is Leucine aminopeptidase 2.